We begin with the raw amino-acid sequence, 731 residues long: Wall-associated receptor kinase-like 5 (731 aa).

The N-terminal stretch at 1–26 (MKTKTYRFVCLVASVLTLQLMNGSSA) is a signal peptide. Topologically, residues 27 to 360 (ATPPPPPNSK…PAKPLVLQGV (334 aa)) are extracellular. Asn-37, Asn-43, Asn-73, Asn-96, Asn-124, Asn-137, Asn-236, and Asn-272 each carry an N-linked (GlcNAc...) asparagine glycan. Residues 285–342 (CLCEYGYFSEMSYRNCYCSLGFTGNPYLRGGCIDNDDCKGPNICEEGTCVNVPGGYRC) form an atypical EGF-like region. 3 disulfides stabilise this stretch: Cys-287/Cys-300, Cys-322/Cys-333, and Cys-328/Cys-342. The helical transmembrane segment at 361-381 (LLGLMGLLFLVVGTLGLIIFI) threads the bilayer. Topologically, residues 382–731 (KKRRRIISSR…EDQVMEISRE (350 aa)) are cytoplasmic. The 274-residue stretch at 432-705 (FSVKRVLGKG…REASLELERI (274 aa)) folds into the Protein kinase domain. ATP-binding positions include 438–446 (LGKGSQGTV) and Lys-460. The residue at position 505 (Tyr-505) is a Phosphotyrosine. Asp-557 serves as the catalytic Proton acceptor. 2 positions are modified to phosphothreonine: Thr-591 and Thr-596. The residue at position 604 (Tyr-604) is a Phosphotyrosine. Residues 709–731 (PEDLEAHIENDDEEDQVMEISRE) form a disordered region.

The protein belongs to the protein kinase superfamily. Ser/Thr protein kinase family. Preferentially expressed in roots and flowers.

It localises to the membrane. It carries out the reaction L-seryl-[protein] + ATP = O-phospho-L-seryl-[protein] + ADP + H(+). It catalyses the reaction L-threonyl-[protein] + ATP = O-phospho-L-threonyl-[protein] + ADP + H(+). Its function is as follows. Serine/threonine-protein kinase that may function as a signaling receptor of extracellular matrix component. May be involved in plant's response to pathogen infection. This Arabidopsis thaliana (Mouse-ear cress) protein is Wall-associated receptor kinase-like 5 (WAKL5).